Reading from the N-terminus, the 72-residue chain is Large ribosomal subunit protein uL29 (72 aa).

The protein belongs to the universal ribosomal protein uL29 family.

This Prochlorococcus marinus (strain MIT 9312) protein is Large ribosomal subunit protein uL29.